We begin with the raw amino-acid sequence, 130 residues long: Small ribosomal subunit protein uS9 (130 aa).

The protein belongs to the universal ribosomal protein uS9 family.

The polypeptide is Small ribosomal subunit protein uS9 (Bordetella bronchiseptica (strain ATCC BAA-588 / NCTC 13252 / RB50) (Alcaligenes bronchisepticus)).